We begin with the raw amino-acid sequence, 368 residues long: Phosphate acyltransferase (368 aa).

It belongs to the PlsX family. In terms of assembly, homodimer. Probably interacts with PlsY.

It localises to the cytoplasm. The enzyme catalyses a fatty acyl-[ACP] + phosphate = an acyl phosphate + holo-[ACP]. The protein operates within lipid metabolism; phospholipid metabolism. Its function is as follows. Catalyzes the reversible formation of acyl-phosphate (acyl-PO(4)) from acyl-[acyl-carrier-protein] (acyl-ACP). This enzyme utilizes acyl-ACP as fatty acyl donor, but not acyl-CoA. This chain is Phosphate acyltransferase, found in Herpetosiphon aurantiacus (strain ATCC 23779 / DSM 785 / 114-95).